A 207-amino-acid chain; its full sequence is Large ribosomal subunit protein uL4 (207 aa).

Residues 45 to 89 form a disordered region; sequence RQGTHKVKTRSEVRGGGRKPWRQKGTGRARQGSIRSPQWRGGGTV. The segment covering 60 to 71 has biased composition (basic residues); sequence GGRKPWRQKGTG.

This sequence belongs to the universal ribosomal protein uL4 family. Part of the 50S ribosomal subunit.

In terms of biological role, one of the primary rRNA binding proteins, this protein initially binds near the 5'-end of the 23S rRNA. It is important during the early stages of 50S assembly. It makes multiple contacts with different domains of the 23S rRNA in the assembled 50S subunit and ribosome. Forms part of the polypeptide exit tunnel. The sequence is that of Large ribosomal subunit protein uL4 from Bacillus anthracis (strain A0248).